The chain runs to 176 residues: NAD(P)H-quinone oxidoreductase subunit J (176 aa).

Composition is skewed to polar residues over residues 1–12 (MEKDSQATSSDT) and 20–30 (ISQSLSKDGIP). A disordered region spans residues 1-30 (MEKDSQATSSDTSIEKEGVISQSLSKDGIP).

This sequence belongs to the complex I 30 kDa subunit family. In terms of assembly, NDH-1 can be composed of about 15 different subunits; different subcomplexes with different compositions have been identified which probably have different functions.

The protein localises to the cellular thylakoid membrane. It catalyses the reaction a plastoquinone + NADH + (n+1) H(+)(in) = a plastoquinol + NAD(+) + n H(+)(out). It carries out the reaction a plastoquinone + NADPH + (n+1) H(+)(in) = a plastoquinol + NADP(+) + n H(+)(out). Functionally, NDH-1 shuttles electrons from an unknown electron donor, via FMN and iron-sulfur (Fe-S) centers, to quinones in the respiratory and/or the photosynthetic chain. The immediate electron acceptor for the enzyme in this species is believed to be plastoquinone. Couples the redox reaction to proton translocation, and thus conserves the redox energy in a proton gradient. Cyanobacterial NDH-1 also plays a role in inorganic carbon-concentration. This chain is NAD(P)H-quinone oxidoreductase subunit J, found in Prochlorococcus marinus (strain AS9601).